The sequence spans 200 residues: ATP-dependent Clp protease proteolytic subunit (200 aa).

Residue Ser98 is the Nucleophile of the active site. The active site involves His123.

Belongs to the peptidase S14 family. Fourteen ClpP subunits assemble into 2 heptameric rings which stack back to back to give a disk-like structure with a central cavity, resembling the structure of eukaryotic proteasomes.

It is found in the cytoplasm. The enzyme catalyses Hydrolysis of proteins to small peptides in the presence of ATP and magnesium. alpha-casein is the usual test substrate. In the absence of ATP, only oligopeptides shorter than five residues are hydrolyzed (such as succinyl-Leu-Tyr-|-NHMec, and Leu-Tyr-Leu-|-Tyr-Trp, in which cleavage of the -Tyr-|-Leu- and -Tyr-|-Trp bonds also occurs).. Functionally, cleaves peptides in various proteins in a process that requires ATP hydrolysis. Has a chymotrypsin-like activity. Plays a major role in the degradation of misfolded proteins. This Deinococcus geothermalis (strain DSM 11300 / CIP 105573 / AG-3a) protein is ATP-dependent Clp protease proteolytic subunit.